Here is a 301-residue protein sequence, read N- to C-terminus: Protoheme IX farnesyltransferase (301 aa).

The next 8 helical transmembrane spans lie at Val-25 to Val-45, Trp-47 to Ile-67, Ile-97 to Asn-117, Leu-119 to Leu-139, Ile-147 to Gly-167, Ala-173 to Leu-193, Phe-235 to Phe-255, and Ile-279 to Ile-299.

Belongs to the UbiA prenyltransferase family. Protoheme IX farnesyltransferase subfamily.

Its subcellular location is the cell inner membrane. It carries out the reaction heme b + (2E,6E)-farnesyl diphosphate + H2O = Fe(II)-heme o + diphosphate. It functions in the pathway porphyrin-containing compound metabolism; heme O biosynthesis; heme O from protoheme: step 1/1. Its function is as follows. Converts heme B (protoheme IX) to heme O by substitution of the vinyl group on carbon 2 of heme B porphyrin ring with a hydroxyethyl farnesyl side group. The chain is Protoheme IX farnesyltransferase from Paraburkholderia xenovorans (strain LB400).